The sequence spans 111 residues: Nucleoid-associated protein Ppha_1174 (111 aa).

Belongs to the YbaB/EbfC family. In terms of assembly, homodimer.

The protein localises to the cytoplasm. Its subcellular location is the nucleoid. Binds to DNA and alters its conformation. May be involved in regulation of gene expression, nucleoid organization and DNA protection. This is Nucleoid-associated protein Ppha_1174 from Pelodictyon phaeoclathratiforme (strain DSM 5477 / BU-1).